Consider the following 449-residue polypeptide: UMP-CMP kinase 2, mitochondrial (449 aa).

The N-terminal 98 residues, 1-98, are a transit peptide targeting the mitochondrion; sequence MAFARRLLRG…VRAARLHQRL (98 aa). 259–266 is a binding site for ATP; sequence GLDATGKT. A coiled-coil region spans residues 380-412; it reads EERLQRLQGRGMEKTREEAELEANSVFRQKVEM.

This sequence belongs to the thymidylate kinase family. As to expression, high levels are observed in myeloid, lymphoid and mesenchymal tissues.

It is found in the mitochondrion. It catalyses the reaction CMP + ATP = CDP + ADP. The enzyme catalyses dCMP + ATP = dCDP + ADP. The catalysed reaction is a 2'-deoxyribonucleoside 5'-diphosphate + ATP = a 2'-deoxyribonucleoside 5'-triphosphate + ADP. It carries out the reaction a ribonucleoside 5'-diphosphate + ATP = a ribonucleoside 5'-triphosphate + ADP. In terms of biological role, mitochondrial nucleotide monophosphate kinase needed for salvage dNTP synthesis that mediates immunomodulatory and antiviral activities through IFN-dependent and IFN-independent pathways. Restricts the replication of multiple viruses including flaviviruses or coronaviruses. Together with viperin/RSAD2 and ddhCTP, suppresses the replication of several coronaviruses through inhibition of the viral RNA-dependent RNA polymerase activities. Concerning flaviviruses, restricts RNA translation when localized to the mitochondria independently of its kinase activity. Is able to phosphorylate dUMP, dCMP, CMP, UMP and monophosphates of the pyrimidine nucleoside analogs ddC, dFdC, araC, BVDU and FdUrd with ATP as phosphate donor. Efficacy is highest for dUMP followed by dCMP while CMP and UMP are poor substrates. Controls therefore mitochondrial DNA synthesis by supplying required deoxyribonucleotides. CMPK2-dependent mitochondrial DNA synthesis is necessary for the production of oxidized mitochondrial DNA fragments after exposure to NLRP3 activators. In turn, cytosolic oxidized mtDNA associates with the NLRP3 inflammasome complex and is required for its activation. This Homo sapiens (Human) protein is UMP-CMP kinase 2, mitochondrial (CMPK2).